The sequence spans 194 residues: Holliday junction branch migration complex subunit RuvA (194 aa).

The tract at residues 1–64 (MIGRLRGILA…EDSVSLYGFL (64 aa)) is domain I. The domain II stretch occupies residues 65 to 140 (REGERRLFRD…RAADFSSGAP (76 aa)). Residues 140–144 (PITGQ) are flexible linker. The domain III stretch occupies residues 145-194 (LGPDAISEATVALQQLGYKPAEAARMARDAGAEGGEVATVIRKALQAALR).

This sequence belongs to the RuvA family. In terms of assembly, homotetramer. Forms an RuvA(8)-RuvB(12)-Holliday junction (HJ) complex. HJ DNA is sandwiched between 2 RuvA tetramers; dsDNA enters through RuvA and exits via RuvB. An RuvB hexamer assembles on each DNA strand where it exits the tetramer. Each RuvB hexamer is contacted by two RuvA subunits (via domain III) on 2 adjacent RuvB subunits; this complex drives branch migration. In the full resolvosome a probable DNA-RuvA(4)-RuvB(12)-RuvC(2) complex forms which resolves the HJ.

The protein localises to the cytoplasm. The RuvA-RuvB-RuvC complex processes Holliday junction (HJ) DNA during genetic recombination and DNA repair, while the RuvA-RuvB complex plays an important role in the rescue of blocked DNA replication forks via replication fork reversal (RFR). RuvA specifically binds to HJ cruciform DNA, conferring on it an open structure. The RuvB hexamer acts as an ATP-dependent pump, pulling dsDNA into and through the RuvAB complex. HJ branch migration allows RuvC to scan DNA until it finds its consensus sequence, where it cleaves and resolves the cruciform DNA. The polypeptide is Holliday junction branch migration complex subunit RuvA (Xanthomonas oryzae pv. oryzae (strain MAFF 311018)).